The chain runs to 205 residues: Large ribosomal subunit protein uL3c (205 aa).

The disordered stretch occupies residues 129–154; the sequence is SRGPMSHGSKNHRQPGSIGAGTTPGR.

This sequence belongs to the universal ribosomal protein uL3 family. As to quaternary structure, part of the 50S ribosomal subunit.

It localises to the plastid. The protein localises to the chloroplast. Its function is as follows. One of the primary rRNA binding proteins, it binds directly near the 3'-end of the 23S rRNA, where it nucleates assembly of the 50S subunit. This chain is Large ribosomal subunit protein uL3c (rpl3), found in Pyropia yezoensis (Susabi-nori).